A 238-amino-acid polypeptide reads, in one-letter code: Acyl-protein thioesterase 1 (238 aa).

Residues S120, D174, and H219 each act as charge relay system in the active site.

The protein belongs to the AB hydrolase superfamily. AB hydrolase 2 family.

The protein localises to the cytoplasm. It is found in the nucleus. It carries out the reaction S-hexadecanoyl-L-cysteinyl-[protein] + H2O = L-cysteinyl-[protein] + hexadecanoate + H(+). Functionally, hydrolyzes fatty acids from S-acylated cysteine residues in proteins with a strong preference for palmitoylated G-alpha proteins over other acyl substrates. Mediates the deacylation of G-alpha proteins such as GPA1 in vivo, but has weak or no activity toward palmitoylated Ras proteins. Has weak lysophospholipase activity in vitro; however such activity may not exist in vivo. This chain is Acyl-protein thioesterase 1, found in Cryptococcus neoformans var. neoformans serotype D (strain B-3501A) (Filobasidiella neoformans).